The primary structure comprises 204 residues: Putative rubrerythrin (204 aa).

The region spanning 1–159 (MINNFFVINM…KLLKEVEEGT (159 aa)) is the Ferritin-like diiron domain. Fe(3+) contacts are provided by glutamate 24, glutamate 57, glutamate 107, glutamate 110, glutamate 141, histidine 144, cysteine 171, cysteine 174, cysteine 187, and cysteine 190. The 39-residue stretch at 166-204 (PVEWVCRKCGFVHLGKEPPEKCPSCSHPRKYFEVKCEKY) folds into the Rubredoxin-like domain.

In terms of assembly, homodimer. Possesses two rubredoxin-like centers and two non-sulfur oxo-bridged di-iron centers per dimer. Fe(3+) serves as cofactor.

The protein resides in the cytoplasm. Functionally, may provide oxidative stress protection via catalytic reduction of intracellular hydrogen peroxide. In Methanocaldococcus jannaschii (strain ATCC 43067 / DSM 2661 / JAL-1 / JCM 10045 / NBRC 100440) (Methanococcus jannaschii), this protein is Putative rubrerythrin.